The sequence spans 598 residues: Serine hydroxymethyltransferase 7 (598 aa).

The tract at residues 57 to 85 is disordered; it reads QLLEQKAEKTTTVDEPKKDGGGGGDQKED. The segment covering 61-85 has biased composition (basic and acidic residues); the sequence is QKAEKTTTVDEPKKDGGGGGDQKED. N6-(pyridoxal phosphate)lysine is present on Lys370.

The protein belongs to the SHMT family. As to quaternary structure, homotetramer. It depends on pyridoxal 5'-phosphate as a cofactor.

Its subcellular location is the cytoplasm. It catalyses the reaction (6R)-5,10-methylene-5,6,7,8-tetrahydrofolate + glycine + H2O = (6S)-5,6,7,8-tetrahydrofolate + L-serine. It functions in the pathway one-carbon metabolism; tetrahydrofolate interconversion. Functionally, catalyzes the interconversion of serine and glycine. This is Serine hydroxymethyltransferase 7 (SHM7) from Arabidopsis thaliana (Mouse-ear cress).